Reading from the N-terminus, the 600-residue chain is MADANKAEVPGATGGDSPHLQPAEPPGEPRREPHPAEAEKQQPQHSSSSNGVKMENDESAKEEKSDLKEKSTGSKKANRFHPYSKDKNSGAGEKKGPNRNRVFISNIPYDMKWQAIKDLMREKVGEVTYVELFKDAEGKSRGCGVVEFKDEEFVKKALETMNKYDLSGRPLNIKEDPDGENARRALQRTGGSFPGGHVPDMGSGLMNLPPSILNNPNIPPEVISNLQAGRLGSTIFVANLDFKVGWKKLKEVFSIAGTVKRADIKEDKDGKSRGMGTVTFEQAIEAVQAISMFNGQFLFDRPMHVKMDDKSVPHEEYRSHDGKTPQLPRGLGGIGMGLGPGGQPISASQLNIGGVMGNLGPGGMGMDGPGFGGMNRIGGGIGFGGLEAMNSMGGFGGVGRMGELYRGAMTSSMERDFGRGDIGINQGFGDSFGRLGSAMIGGFAGRIGSSNMGPVGSGISGGMGSMNSVTGGMGMGLDRMSSSFDRMGPGIGAILERSIDMDRGFLSGPMGSGMRERIGSKGNQIFVRNLPFDLTWQKLKEKFSQCGHVMFAEIKMENGKSKGCGTVRFDSPESAEKACRIMNGIKISGREIDVRLDRNA.

A disordered region spans residues 1-101; that stretch reads MADANKAEVP…GEKKGPNRNR (101 aa). Thr13 carries the phosphothreonine modification. Ser17 is modified (phosphoserine). Over residues 27 to 42 the composition is skewed to basic and acidic residues; sequence GEPRREPHPAEAEKQQ. Lys53 is covalently cross-linked (Glycyl lysine isopeptide (Lys-Gly) (interchain with G-Cter in SUMO2)). Basic and acidic residues-rich tracts occupy residues 54–72 and 83–96; these read MEND…EKST and YSKD…EKKG. RRM domains follow at residues 100-178 and 233-310; these read NRVF…EDPD and STIF…MDDK. Arg406 is subject to Omega-N-methylarginine. Phosphoserine is present on Ser431. Residues 523-599 enclose the RRM 3 domain; sequence NQIFVRNLPF…REIDVRLDRN (77 aa).

As to quaternary structure, monomer.

It localises to the nucleus. Its function is as follows. Transcriptional repressor of the myelin basic protein gene (MBP). Binds to the proximal MB1 element 5'-TTGTCC-3' of the MBP promoter. Its binding to MB1 and function are inhibited by PURA. The chain is Myelin expression factor 2 (MYEF2) from Homo sapiens (Human).